Here is a 398-residue protein sequence, read N- to C-terminus: Keratinocyte differentiation factor 1 (398 aa).

Disordered regions lie at residues 1 to 60 (MPRP…SITF) and 123 to 156 (AEAN…STMG). The segment covering 44 to 55 (RPDPKDPGHHGP) has biased composition (basic and acidic residues). At serine 218 the chain carries Phosphoserine. Disordered regions lie at residues 307–340 (RKSR…TMVG) and 369–392 (GAPG…SGAP). The segment covering 377–389 (HDSSFQGTDTDSS) has biased composition (polar residues).

The protein localises to the cytoplasm. Its subcellular location is the cell junction. Functionally, plays a role in the regulation of the epidermis formation during early development. Required both as an inhibitor of basal cell proliferation and a promoter of differentiation of basal progenitor cell progeny. The sequence is that of Keratinocyte differentiation factor 1 (KDF1) from Homo sapiens (Human).